We begin with the raw amino-acid sequence, 710 residues long: Early transcription factor 82 kDa subunit (710 aa).

It belongs to the poxviridae VETF large subunit family. Heterodimer of a 70 kDa and a 82 kDa subunit. Part of the early transcription complex composed of ETF, RAP94/OPG109, and the DNA-directed RNA polymerase.

Its subcellular location is the virion. Functionally, acts with RNA polymerase to initiate transcription from early gene promoters. Is recruited by the RPO-associated protein of 94 kDa RAP94/OPG109 to form the early transcription complex, which also contains the core RNA polymerase. ETF heterodimer binds to early gene promoters. This Bos taurus (Bovine) protein is Early transcription factor 82 kDa subunit (OPG133).